The chain runs to 73 residues: U3-agatoxin-Ao1i (73 aa).

Positions 1–20 (MRTIISLLLLSAMVFAEIEA) are cleaved as a signal peptide. A propeptide spanning residues 21-34 (ISLEEGLQLFEGER) is cleaved from the precursor. Disulfide bonds link Cys-36/Cys-52, Cys-43/Cys-57, Cys-51/Cys-67, and Cys-59/Cys-65. Ser-71 is subject to Serine amide.

The protein belongs to the neurotoxin 07 (Beta/delta-agtx) family. 03 (aga-4) subfamily. Aga sub-subfamily. In terms of tissue distribution, expressed by the venom gland.

It localises to the secreted. In terms of biological role, insecticidal neurotoxin that induces an irreversible spastic paralysis when injected into insects. Modifies presynaptic voltage-gated sodium channels (Nav), causing them to open at the normal resting potential of the nerve. This leads to spontaneous release of neurotransmitter and repetitive action potentials in motor neurons. In Agelena orientalis (Funnel-web spider), this protein is U3-agatoxin-Ao1i.